A 297-amino-acid chain; its full sequence is Streptogrisin-A (297 aa).

An N-terminal signal peptide occupies residues 1–38 (MTFKRFSPLSSTSRYARLLAVASGLVAAAALATPSAVA). The propeptide occupies 39–115 (APEAESKATV…VKRAEGKFTP (77 aa)). A disulfide bridge links C130 with C150. Residues H149, D171, and S253 each act as charge relay system in the active site. C247 and C274 are oxidised to a cystine.

It belongs to the peptidase S1 family. In terms of assembly, monomer.

The catalysed reaction is Hydrolysis of proteins with specificity similar to chymotrypsin.. Has a primary specificity for large aliphatic or aromatic amino acids. This Streptomyces griseus protein is Streptogrisin-A (sprA).